The following is a 314-amino-acid chain: Pantothenate kinase (314 aa).

93–100 (GSVAVGKS) lines the ATP pocket.

Belongs to the prokaryotic pantothenate kinase family.

It is found in the cytoplasm. It catalyses the reaction (R)-pantothenate + ATP = (R)-4'-phosphopantothenate + ADP + H(+). It participates in cofactor biosynthesis; coenzyme A biosynthesis; CoA from (R)-pantothenate: step 1/5. This Shewanella denitrificans (strain OS217 / ATCC BAA-1090 / DSM 15013) protein is Pantothenate kinase.